Here is a 445-residue protein sequence, read N- to C-terminus: Interferon-activable protein 202 (445 aa).

Over residues 1–27 the composition is skewed to polar residues; sequence MSNRNLRSSTNSEFSEGQHQTPSSDSS. Residues 1-57 are disordered; it reads MSNRNLRSSTNSEFSEGQHQTPSSDSSGHGEDQPQASPGPNKKSHTPKKNISKGAVL. The segment covering 42 to 51 has biased composition (basic residues); that stretch reads KKSHTPKKNI. 2 HIN-200 domains span residues 46 to 243 and 244 to 441; these read TPKK…IKGE and KLLK…MEVI. Required for homomultimerization stretches follow at residues 82-89 and 281-288; these read MFHATVAT.

Belongs to the HIN-200 family. Homomultimer; homotetramerizes (via HIN-200 domain 2), enhancing affinity for double-stranded DNA (dsDNA). Interacts (via HIN-200 domain 2) with AIM2 (via HIN-200 domain); preventing activation of the AIM2 inflammasome. Binds to several transcription factors, including NF-kappa-B p50 (NFKB1) and p65 (RELA), FOS, JUN, E2F1, E2F4, MYOD1 and myogenin. Also binds TP53/p53, the hypophosphorylated, growth-inhibitory form of the retinoblastoma protein and the p53-binding protein 1 (TP53BP1). Phosphorylated.

The protein localises to the cytoplasm. Its subcellular location is the nucleus. In terms of biological role, DNA-binding protein involved in innate immune response and has anti-inflammatory activity. Inhibits caspase activation in response to cytosolic DNA by preventing activation of the AIM2 inflammasome, probably by sequestering cytoplasmic DNA and preventing its being bound by AIM2. Also inhibits activation of the AIM2 inflammasome via a direct interaction with AIM2, which prevents the interaction between AIM2 and PYCARD and formation of the AIM2 inflammasome. Binds double-stranded DNA (dsDNA) in the cytosol. Has anti-apoptotic effects due to inhibition of the transcriptional activity of TP53/p53. Inhibits the transcriptional activity of several transcription factors, including NF-kappa-B p50 and p65, FOS, JUN, E2F1, E2F4, MYOD1 and myogenin. In Mus musculus (Mouse), this protein is Interferon-activable protein 202.